The primary structure comprises 451 residues: Alpha-galactosidase (451 aa).

5–71 (PKITFIGAGS…ASGRITCHTN (67 aa)) is a binding site for NAD(+). Substrate is bound at residue Asn151. Mn(2+) is bound at residue Cys173. His174 serves as the catalytic Proton donor. His203 provides a ligand contact to Mn(2+). Arg287 contributes to the substrate binding site.

It belongs to the glycosyl hydrolase 4 family. In terms of assembly, homodimer. Requires Mn(2+) as cofactor. It depends on NAD(+) as a cofactor.

The enzyme catalyses Hydrolysis of terminal, non-reducing alpha-D-galactose residues in alpha-D-galactosides, including galactose oligosaccharides, galactomannans and galactolipids.. This chain is Alpha-galactosidase (melA), found in Salmonella typhimurium (strain LT2 / SGSC1412 / ATCC 700720).